We begin with the raw amino-acid sequence, 138 residues long: Acidic phospholipase A2 inhibitor chain HPD-1I (138 aa).

The first 16 residues, 1–16, serve as a signal peptide directing secretion; that stretch reads MRTLWIVAVCLIGVEG. Cystine bridges form between Cys-42–Cys-131, Cys-44–Cys-60, Cys-59–Cys-111, Cys-65–Cys-138, Cys-66–Cys-104, Cys-73–Cys-97, and Cys-91–Cys-102.

As to quaternary structure, heterodimer of an acidic and a basic chain; non-covalently linked. The basic chain is toxic and has phospholipase A2 activity (chain HDP-1P (AC Q1RP79) or HDP-2P (AC Q1RP78)) and the acidic chain is non-toxic and functions as its inhibitor (chain HPD-1I). Expressed by the venom gland.

The protein localises to the secreted. Heterodimer: slightly affects neuromuscular transmission acting presynaptically. It has a low catalytic activity, a low anticoagulant activity and weakly inhibits ADP-induced platelet aggregation. Functionally, monomer: has no activity (neurotoxic, catalytic, anticoagulant and a ADP-induced platelet aggregation), but inhibits phospholipase A2. The sequence is that of Acidic phospholipase A2 inhibitor chain HPD-1I from Vipera nikolskii (Nikolsky's adder).